Consider the following 451-residue polypeptide: Tubulin beta-4 chain (451 aa).

8 residues coordinate GTP: glutamine 11, glutamate 69, serine 138, glycine 142, threonine 143, glycine 144, asparagine 204, and asparagine 226. Position 69 (glutamate 69) interacts with Mg(2+). The segment covering 417-427 (DLVSEYQQYQD) has biased composition (polar residues). The tract at residues 417-451 (DLVSEYQQYQDATAEEEGEYDEDDGGYGDEDDGMM) is disordered. Positions 429-451 (TAEEEGEYDEDDGGYGDEDDGMM) are enriched in acidic residues.

This sequence belongs to the tubulin family. As to quaternary structure, dimer of alpha and beta chains. A typical microtubule is a hollow water-filled tube with an outer diameter of 25 nm and an inner diameter of 15 nM. Alpha-beta heterodimers associate head-to-tail to form protofilaments running lengthwise along the microtubule wall with the beta-tubulin subunit facing the microtubule plus end conferring a structural polarity. Microtubules usually have 13 protofilaments but different protofilament numbers can be found in some organisms and specialized cells. Mg(2+) serves as cofactor.

The protein resides in the cytoplasm. It localises to the cytoskeleton. Tubulin is the major constituent of microtubules, a cylinder consisting of laterally associated linear protofilaments composed of alpha- and beta-tubulin heterodimers. Microtubules grow by the addition of GTP-tubulin dimers to the microtubule end, where a stabilizing cap forms. Below the cap, tubulin dimers are in GDP-bound state, owing to GTPase activity of alpha-tubulin. This chain is Tubulin beta-4 chain (TUBB4), found in Oomycete-like sp. (strain MacKay2000).